The following is a 253-amino-acid chain: Ribosome-inactivating protein saporin-7 (253 aa).

Glu176 is a catalytic residue.

This sequence belongs to the ribosome-inactivating protein family. Type 1 RIP subfamily.

The enzyme catalyses Endohydrolysis of the N-glycosidic bond at one specific adenosine on the 28S rRNA.. Functionally, ribosome-inactivating protein of type 1, inhibits protein synthesis in animal cells. The chain is Ribosome-inactivating protein saporin-7 (SAP7) from Saponaria officinalis (Common soapwort).